A 257-amino-acid polypeptide reads, in one-letter code: Spermidine/putrescine transport system permease protein PotC (257 aa).

Residues 1–7 (MSRFFLR) are Cytoplasmic-facing. The chain crosses the membrane as a helical span at residues 8-27 (NAFMFVVYAYLYIPIIILVT). Over 28-65 (NSFNKDRYGLSWKGFSWNWYERLFNNDTLIQAAIHSVT) the chain is Periplasmic. The region spanning 60-248 (AIHSVTIAFF…VLSLALVVLS (189 aa)) is the ABC transmembrane type-1 domain. A helical transmembrane segment spans residues 66–85 (IAFFAATLATIVGGLTAIAL). The Cytoplasmic segment spans residues 86-100 (YRYRFRGKQAVSGML). A helical membrane pass occupies residues 101–120 (FIVMMSPDIVMAVSLLALFM). The Periplasmic segment spans residues 121–128 (VVGISLGF). A helical transmembrane segment spans residues 129-148 (WSLLLAHVTFCLPYVTVTIF). The Cytoplasmic segment spans residues 149–176 (SRLNGFDSRMLEAAKDLGASEVTILRKI). The helical transmembrane segment at 177–196 (ILPLALPAVVSGWLLSFTIS) threads the bilayer. Residues 197 to 231 (LDDVVVSSFVSGVSYEILPLRIFSLVKTGVTPEVN) are Periplasmic-facing. A helical membrane pass occupies residues 232–251 (ALATIMIVLSLALVVLSQLI). The Cytoplasmic portion of the chain corresponds to 252–257 (TRKNNH).

It belongs to the binding-protein-dependent transport system permease family. CysTW subfamily.

It is found in the cell inner membrane. Its function is as follows. Required for the activity of the bacterial periplasmic transport system of putrescine and spermidine. The protein is Spermidine/putrescine transport system permease protein PotC (potC) of Haemophilus influenzae (strain ATCC 51907 / DSM 11121 / KW20 / Rd).